The primary structure comprises 1755 residues: Transposon Ty1-OR Gag-Pol polyprotein (1755 aa).

3 stretches are compositionally biased toward polar residues: residues 1–10 (MESQQLSNYP), 48–60 (TKANSQQTTTPAS), and 127–152 (QSQFPQYPSSVGTPLSTPSPESGNTF). Disordered stretches follow at residues 1-93 (MESQ…MMTQ), 126-173 (PQSQ…RPPP), and 352-421 (GSRN…SKST). Low complexity predominate over residues 153–165 (TDSSSADSDMTST). The RNA-binding stretch occupies residues 299–401 (NNGIHINNKV…NSKSKTARAH (103 aa)). The span at 402–418 (NVSTSNNSPSTDNDSIS) shows a compositional bias: low complexity. Phosphoserine is present on serine 416. The active-site For protease activity; shared with dimeric partner is aspartate 461. The integrase-type zinc finger-like stretch occupies residues 583 to 640 (NVHTSESTRKYPYPFIHRMLAHANAQTIRYSLKNNTITYFNESDVDWSSAIDYQCPDC). Residues 660–835 (NSYEPFQYLH…AGLDISTLLP (176 aa)) form the Integrase catalytic domain. Aspartate 671 and aspartate 736 together coordinate Mg(2+). Disordered regions lie at residues 956 to 1087 (SKAV…ETEK), 1092 to 1111 (RSPSIDASPPENNSSHNIVP), and 1130 to 1187 (DLPL…DNET). Positions 960-969 (SPTDSTPPST) are enriched in low complexity. A compositionally biased stretch (polar residues) spans 1005–1015 (STPQISNIEST). Over residues 1038–1053 (ESSHASKSKDFRHSDS) the composition is skewed to basic and acidic residues. 2 stretches are compositionally biased toward polar residues: residues 1054–1082 (YSENETNHTNVPISSTGGTNNKTVPQISD) and 1101–1111 (PENNSSHNIVP). The Bipartite nuclear localization signal signature appears at 1178–1212 (KKRSLEDNETEIKVSRDTWNTKNMRSLEPPRSKKR). One can recognise a Reverse transcriptase Ty1/copia-type domain in the interval 1338–1476 (NNYYITQLDI…DILGLEIKYQ (139 aa)). Mg(2+) is bound by residues aspartate 1346, aspartate 1427, aspartate 1428, aspartate 1610, glutamate 1652, and aspartate 1685. Residues 1610–1752 (DASYGNQPYY…IKTFKLLTNK (143 aa)) form the RNase H Ty1/copia-type domain.

In terms of assembly, the capsid protein forms a homotrimer, from which the VLPs are assembled. The protease is a homodimer, whose active site consists of two apposed aspartic acid residues. In terms of processing, initially, virus-like particles (VLPs) are composed of the structural unprocessed proteins Gag and Gag-Pol, and also contain the host initiator methionine tRNA (tRNA(i)-Met) which serves as a primer for minus-strand DNA synthesis, and a dimer of genomic Ty RNA. Processing of the polyproteins occurs within the particle and proceeds by an ordered pathway, called maturation. First, the protease (PR) is released by autocatalytic cleavage of the Gag-Pol polyprotein yielding capsid protein p45 and a Pol-p154 precursor protein. This cleavage is a prerequisite for subsequent processing of Pol-p154 at the remaining sites to release the mature structural and catalytic proteins. Maturation takes place prior to the RT reaction and is required to produce transposition-competent VLPs.

It localises to the cytoplasm. The protein resides in the nucleus. It catalyses the reaction DNA(n) + a 2'-deoxyribonucleoside 5'-triphosphate = DNA(n+1) + diphosphate. The enzyme catalyses Endonucleolytic cleavage to 5'-phosphomonoester.. In terms of biological role, capsid protein (CA) is the structural component of the virus-like particle (VLP), forming the shell that encapsulates the retrotransposons dimeric RNA genome. The particles are assembled from trimer-clustered units and there are holes in the capsid shells that allow for the diffusion of macromolecules. CA also has nucleocapsid-like chaperone activity, promoting primer tRNA(i)-Met annealing to the multipartite primer-binding site (PBS), dimerization of Ty1 RNA and initiation of reverse transcription. Its function is as follows. The aspartyl protease (PR) mediates the proteolytic cleavages of the Gag and Gag-Pol polyproteins after assembly of the VLP. Functionally, reverse transcriptase/ribonuclease H (RT) is a multifunctional enzyme that catalyzes the conversion of the retro-elements RNA genome into dsDNA within the VLP. The enzyme displays a DNA polymerase activity that can copy either DNA or RNA templates, and a ribonuclease H (RNase H) activity that cleaves the RNA strand of RNA-DNA heteroduplexes during plus-strand synthesis and hydrolyzes RNA primers. The conversion leads to a linear dsDNA copy of the retrotransposon that includes long terminal repeats (LTRs) at both ends. Integrase (IN) targets the VLP to the nucleus, where a subparticle preintegration complex (PIC) containing at least integrase and the newly synthesized dsDNA copy of the retrotransposon must transit the nuclear membrane. Once in the nucleus, integrase performs the integration of the dsDNA into the host genome. The polypeptide is Transposon Ty1-OR Gag-Pol polyprotein (TY1B-OR) (Saccharomyces cerevisiae (strain ATCC 204508 / S288c) (Baker's yeast)).